The chain runs to 151 residues: Mediator of RNA polymerase II transcription subunit 32 (151 aa).

Positions 128–151 (GVAPGSVHSSSTGFDSRFSEDSTQ) are disordered.

The protein belongs to the mediator complex subunit 32 family. Oligomers. Component of the Mediator complex. Interacts with MED6. Interacts with GEBPL.

The protein resides in the nucleus. In terms of biological role, component of the Mediator complex, a coactivator involved in the regulated transcription of nearly all RNA polymerase II-dependent genes. Mediator functions as a bridge to convey information from gene-specific regulatory proteins to the basal RNA polymerase II transcription machinery. The Mediator complex, having a compact conformation in its free form, is recruited to promoters by direct interactions with regulatory proteins and serves for the assembly of a functional pre-initiation complex with RNA polymerase II and the general transcription factors. This Arabidopsis thaliana (Mouse-ear cress) protein is Mediator of RNA polymerase II transcription subunit 32 (MED32).